The primary structure comprises 552 residues: Protein FAM234A (552 aa).

Over residues 1 to 22 (MLDHKDLEAEIHPLKNEERKSQ) the composition is skewed to basic and acidic residues. A disordered region spans residues 1-40 (MLDHKDLEAEIHPLKNEERKSQENLGNPSKNEDNVKSAPP). Residues 1–49 (MLDHKDLEAEIHPLKNEERKSQENLGNPSKNEDNVKSAPPQSRLSRCRA) lie on the Cytoplasmic side of the membrane. At S21 the chain carries Phosphoserine. Residues 50 to 70 (AAFFLSLFLCLFVVFVVSFVI) traverse the membrane as a helical; Signal-anchor for type II membrane protein segment. The Extracellular portion of the chain corresponds to 71 to 552 (PCPDRPASQR…FSRLRYQSEA (482 aa)). 4 N-linked (GlcNAc...) asparagine glycosylation sites follow: N116, N314, N389, and N473.

This sequence belongs to the FAM234 family.

It localises to the membrane. The sequence is that of Protein FAM234A from Homo sapiens (Human).